A 160-amino-acid polypeptide reads, in one-letter code: Transcription antitermination protein NusB (160 aa).

The protein belongs to the NusB family.

Its function is as follows. Involved in transcription antitermination. Required for transcription of ribosomal RNA (rRNA) genes. Binds specifically to the boxA antiterminator sequence of the ribosomal RNA (rrn) operons. This Rhizobium etli (strain CIAT 652) protein is Transcription antitermination protein NusB.